Here is a 207-residue protein sequence, read N- to C-terminus: Cytochrome c biogenesis ATP-binding export protein CcmA (207 aa).

The ABC transporter domain occupies Leu4–Ala207. Gly36–Thr43 contacts ATP.

Belongs to the ABC transporter superfamily. CcmA exporter (TC 3.A.1.107) family. In terms of assembly, the complex is composed of two ATP-binding proteins (CcmA) and two transmembrane proteins (CcmB).

It localises to the cell inner membrane. The enzyme catalyses heme b(in) + ATP + H2O = heme b(out) + ADP + phosphate + H(+). In terms of biological role, part of the ABC transporter complex CcmAB involved in the biogenesis of c-type cytochromes; once thought to export heme, this seems not to be the case, but its exact role is uncertain. Responsible for energy coupling to the transport system. This chain is Cytochrome c biogenesis ATP-binding export protein CcmA, found in Shigella boydii serotype 4 (strain Sb227).